The sequence spans 127 residues: MFQLLCAVFIGGGTGSVLRWWLGMKLNPVHHAIPIGTLTANLVGAFVIGAGLAWFNRLTDIDPMWKLLITTGFCGGLTTFSTFSAEVVFLLQQGRVSWALLNVMVNLLGSFAMTAVAFWLFSQAASR.

A run of 4 helical transmembrane segments spans residues 4-24 (LLCAVFIGGGTGSVLRWWLGM), 35-55 (IGTLTANLVGAFVIGAGLAWF), 71-91 (TGFCGGLTTFSTFSAEVVFLL), and 101-121 (LNVMVNLLGSFAMTAVAFWLF). Residues G75 and T78 each contribute to the Na(+) site.

Belongs to the fluoride channel Fluc/FEX (TC 1.A.43) family.

It localises to the cell inner membrane. It carries out the reaction fluoride(in) = fluoride(out). Na(+) is not transported, but it plays an essential structural role and its presence is essential for fluoride channel function. Functionally, fluoride-specific ion channel. Important for reducing fluoride concentration in the cell, thus reducing its toxicity. The polypeptide is Fluoride-specific ion channel FluC (Klebsiella pneumoniae (strain 342)).